A 1549-amino-acid chain; its full sequence is Trichohyalin (1549 aa).

Residues 1-91 (MSPLLRSIFN…AAACYYALGQ (91 aa)) form an S-100-like region. EF-hand domains lie at 23–48 (CDGT…LRKP) and 49–84 (HDPE…VAAA). Residues threonine 27, aspartate 32, aspartate 62, aspartate 64, aspartate 66, and glutamate 73 each contribute to the Ca(2+) site. Disordered stretches follow at residues 97-125 (EKEA…PQDR), 157-180 (LQRR…GREL), 262-359 (LRRK…KQEQ), and 404-448 (QREK…RQER). Basic and acidic residues-rich tracts occupy residues 171–180 (LQQRPKGREL), 262–278 (LRRK…RQEQ), and 317–335 (HRQE…ERQQ). The span at 336–348 (EQQISEEVQSLQE) shows a compositional bias: low complexity. Residues 349-359 (DQGRQRLKQEQ) show a composition bias toward basic and acidic residues. A run of 14 repeats spans residues 413-448 (ERQY…RQER), 449-476 (EKQY…RQER), 477-504 (EKQY…RQER), 505-532 (ERQY…RQER), 533-560 (ERQY…RQER), 561-588 (EKQY…RQER), 589-616 (EKQY…RQER), 617-644 (ERQY…RQER), 645-678 (ERQY…RQER), 679-706 (ERQY…RQER), 707-742 (ERQY…RQVR), 743-771 (ERKY…DREK), 772-796 (RQYL…RQER), and 797-832 (ERQY…RQEL). The 14 X 28 AA approximate tandem repeats stretch occupies residues 413 to 832 (ERQYREVELQ…ECEKRRRQEL (420 aa)). 3 disordered regions span residues 782-803 (REEE…YREE), 839-942 (EELQ…RKFR), and 980-1000 (QLRQ…ERDR). Composition is skewed to basic and acidic residues over residues 850-884 (FRDD…DSWV), 895-918 (PLQD…KRDS), and 925-942 (LLER…RKFR). 23 consecutive repeat copies span residues 938–961 (DRKF…YLEE), 962–985 (DRKF…RQER), 986–1021 (DRKF…RQER), 1022–1044 (DRKF…RQER), 1045–1067 (DRKF…RQER), 1068–1090 (DRKF…LRQE), 1091–1121 (RNRK…RQKR), 1122–1144 (DRKF…RQER), 1145–1167 (DRKF…RQER), 1168–1197 (DRKF…RQER), 1198–1227 (DRKF…RQER), 1228–1250 (DRKF…RQER), 1251–1273 (DRKF…RQER), 1274–1296 (DRKF…RQER), 1297–1319 (DRKF…RQER), 1320–1342 (DRKF…RQER), 1343–1368 (DRKF…ELEG), 1369–1391 (VFSQ…QRQR), 1392–1416 (DRKF…VQEQ), 1417–1439 (DRKF…RRRQ), 1440–1461 (QLDQ…RRQE), 1462–1484 (QELR…EEEQ), and 1485–1507 (LRRQ…SRRQ). The 23 X 23 AA approximate tandem repeats stretch occupies residues 938–1507 (DRKFREEEQL…ERDVQQSRRQ (570 aa)). The span at 1489-1523 (QQEEQKRRQERDVQQSRRQVWEEDKGRRQVLEAGK) shows a compositional bias: basic and acidic residues. Residues 1489–1549 (QQEEQKRRQE…IQEQRSQYRP (61 aa)) are disordered.

Belongs to the S100-fused protein family. In terms of assembly, homodimer. Substrate of transglutaminase. Some 200 arginines are probably converted to citrullines by peptidylarginine deimidase. Found in the hard keratinizing tissues such as the inner root sheath (IRS) of hair follicles and medulla, and in the epithelia of the tongue, hoof and rumen.

Intermediate filament-associated protein that associates in regular arrays with keratin intermediate filaments (KIF) of the inner root sheath cells of the hair follicle and the granular layer of the epidermis. It later becomes cross-linked to KIF by isodipeptide bonds. It may serve as scaffold protein, together with involucrin, in the organization of the cell envelope or even anchor the cell envelope to the KIF network. It may be involved in its own calcium-dependent postsynthetic processing during terminal differentiation. This is Trichohyalin (TCHH) from Ovis aries (Sheep).